We begin with the raw amino-acid sequence, 427 residues long: Acetyl-CoA acetyltransferase, mitochondrial (427 aa).

Residues 1–33 constitute a mitochondrion transit peptide; sequence MAVLAALLRGGARSRSPLLRRLVQEIRYVERSY. Residue lysine 66 is modified to N6-acetyllysine; alternate. An N6-succinyllysine; alternate modification is found at lysine 66. Lysine 78 carries the post-translational modification N6-succinyllysine. The Acyl-thioester intermediate role is filled by cysteine 126. An N6-acetyllysine; alternate mark is found at lysine 174, lysine 181, lysine 190, and lysine 202. An N6-succinyllysine; alternate mark is found at lysine 174, lysine 181, lysine 190, and lysine 202. Tyrosine 219 is a binding site for CoA. K(+) is bound at residue tyrosine 219. N6-acetyllysine; alternate occurs at positions 223 and 230. An N6-succinyllysine; alternate mark is found at lysine 223 and lysine 230. Lysine 243 carries the post-translational modification N6-succinyllysine. An N6-acetyllysine mark is found at lysine 251 and lysine 257. CoA is bound by residues 258-260 and lysine 263; that span reads RVD. An N6-acetyllysine; alternate modification is found at lysine 263. Lysine 263 is modified (N6-succinyllysine; alternate). 2 positions are modified to N6-succinyllysine: lysine 266 and lysine 268. Lysine 273 is modified (N6-acetyllysine). The K(+) site is built by alanine 280, alanine 281, and alanine 283. Serine 284 is a binding site for CoA. Lysine 338 carries the N6-acetyllysine modification. Valine 381 serves as a coordination point for K(+). Cysteine 413 (proton donor/acceptor) is an active-site residue.

This sequence belongs to the thiolase-like superfamily. Thiolase family. Homotetramer. In terms of processing, succinylation at Lys-268, adjacent to a coenzyme A binding site. Desuccinylated by SIRT5.

It localises to the mitochondrion. It catalyses the reaction 2 acetyl-CoA = acetoacetyl-CoA + CoA. The catalysed reaction is propanoyl-CoA + acetyl-CoA = 2-methyl-3-oxobutanoyl-CoA + CoA. It participates in lipid metabolism; fatty acid beta-oxidation. Its activity is regulated as follows. Activated by potassium ions, but not sodium ions. Its function is as follows. This is one of the enzymes that catalyzes the last step of the mitochondrial beta-oxidation pathway, an aerobic process breaking down fatty acids into acetyl-CoA. Using free coenzyme A/CoA, catalyzes the thiolytic cleavage of medium- to long-chain 3-oxoacyl-CoAs into acetyl-CoA and a fatty acyl-CoA shortened by two carbon atoms. The activity of the enzyme is reversible and it can also catalyze the condensation of two acetyl-CoA molecules into acetoacetyl-CoA. Thereby, it plays a major role in ketone body metabolism. The polypeptide is Acetyl-CoA acetyltransferase, mitochondrial (ACAT1) (Macaca fascicularis (Crab-eating macaque)).